We begin with the raw amino-acid sequence, 104 residues long: Large ribosomal subunit protein uL24 (104 aa).

This sequence belongs to the universal ribosomal protein uL24 family. Part of the 50S ribosomal subunit.

Its function is as follows. One of two assembly initiator proteins, it binds directly to the 5'-end of the 23S rRNA, where it nucleates assembly of the 50S subunit. Functionally, one of the proteins that surrounds the polypeptide exit tunnel on the outside of the subunit. The protein is Large ribosomal subunit protein uL24 of Psychromonas ingrahamii (strain DSM 17664 / CCUG 51855 / 37).